Here is a 416-residue protein sequence, read N- to C-terminus: Cotranscriptional regulator ARB2A homolog (416 aa).

The signal sequence occupies residues 1–23 (MHFYFNVLNLLTVWVMMAQLQQG). The segment at 211 to 248 (AQVQLSSDSSDEPAEKRERKDKIQKETKKRRDFYEKYR) is disordered. Over residues 223-236 (PAEKRERKDKIQKE) the composition is skewed to basic and acidic residues. Serine 293 functions as the Nucleophile in the catalytic mechanism. N-linked (GlcNAc...) asparagine glycosylation is present at asparagine 397.

This sequence belongs to the ARB2A family.

The protein resides in the nucleus. The protein localises to the cytoplasm. Its function is as follows. May play role in the regulation of alternative splicing. May have hydrolase activity. The protein is Cotranscriptional regulator ARB2A homolog (ARB2A) of Gallus gallus (Chicken).